A 538-amino-acid polypeptide reads, in one-letter code: Putative cysteine ligase BshC (538 aa).

It belongs to the BshC family.

Functionally, involved in bacillithiol (BSH) biosynthesis. May catalyze the last step of the pathway, the addition of cysteine to glucosamine malate (GlcN-Mal) to generate BSH. This chain is Putative cysteine ligase BshC, found in Halalkalibacterium halodurans (strain ATCC BAA-125 / DSM 18197 / FERM 7344 / JCM 9153 / C-125) (Bacillus halodurans).